We begin with the raw amino-acid sequence, 137 residues long: Putative pre-16S rRNA nuclease (137 aa).

This sequence belongs to the YqgF nuclease family.

The protein localises to the cytoplasm. Functionally, could be a nuclease involved in processing of the 5'-end of pre-16S rRNA. The chain is Putative pre-16S rRNA nuclease from Anaeromyxobacter dehalogenans (strain 2CP-1 / ATCC BAA-258).